We begin with the raw amino-acid sequence, 445 residues long: 3-phosphoshikimate 1-carboxyvinyltransferase (445 aa).

3-phosphoshikimate contacts are provided by Lys-21, Ser-22, and Arg-26. Lys-21 serves as a coordination point for phosphoenolpyruvate. Residues Gly-92 and Arg-120 each coordinate phosphoenolpyruvate. 3-phosphoshikimate contacts are provided by Ser-165, Gln-166, Asp-307, and Lys-334. Phosphoenolpyruvate is bound at residue Gln-166. The Proton acceptor role is filled by Asp-307. Residues Arg-338, Arg-379, and Lys-405 each coordinate phosphoenolpyruvate.

This sequence belongs to the EPSP synthase family. Monomer.

It localises to the cytoplasm. The enzyme catalyses 3-phosphoshikimate + phosphoenolpyruvate = 5-O-(1-carboxyvinyl)-3-phosphoshikimate + phosphate. Its pathway is metabolic intermediate biosynthesis; chorismate biosynthesis; chorismate from D-erythrose 4-phosphate and phosphoenolpyruvate: step 6/7. In terms of biological role, catalyzes the transfer of the enolpyruvyl moiety of phosphoenolpyruvate (PEP) to the 5-hydroxyl of shikimate-3-phosphate (S3P) to produce enolpyruvyl shikimate-3-phosphate and inorganic phosphate. The protein is 3-phosphoshikimate 1-carboxyvinyltransferase of Chlamydia abortus (strain DSM 27085 / S26/3) (Chlamydophila abortus).